Here is a 64-residue protein sequence, read N- to C-terminus: Large ribosomal subunit protein bL35 (64 aa).

It belongs to the bacterial ribosomal protein bL35 family.

The sequence is that of Large ribosomal subunit protein bL35 from Acidothermus cellulolyticus (strain ATCC 43068 / DSM 8971 / 11B).